A 265-amino-acid chain; its full sequence is MIKWPWKAQEITQNEDWPWDNALAIPLLVNLTAQEQARLIALAERFLQQKRLVALQGFELDSLKSARIALIFCLPILELGIEWLDGFHEVLIYPAPFVVDDEWEDDIGLVHSQRVVQSGQSWQQGPIILNWLDIQDSFDASGFNLIIHEVAHKLDMRNGDRASGIPFIPLRDVAGWEHDLHAAMNNIQDEIDLVGESAASIDAYAATDPAECFAVLSEYFFSAPELFAPRFPALWQRFCQFYRQDPSQRLRVSAAEGDYGEESEH.

The Zn(2+) site is built by H111, H148, H152, and E211.

This sequence belongs to the MtfA family. Interacts with Mlc. It depends on Zn(2+) as a cofactor.

The protein localises to the cytoplasm. Functionally, involved in the modulation of the activity of the glucose-phosphotransferase system (glucose-PTS). Interacts with the transcriptional repressor Mlc, preventing its interaction with DNA and leading to the modulation of expression of genes regulated by Mlc, including ptsG, which encodes the PTS system glucose-specific EIICB component. In terms of biological role, shows zinc-dependent metallopeptidase activity. The chain is Mlc titration factor A from Salmonella choleraesuis (strain SC-B67).